Reading from the N-terminus, the 87-residue chain is Small ribosomal subunit protein bS18B (87 aa).

The protein belongs to the bacterial ribosomal protein bS18 family. In terms of assembly, part of the 30S ribosomal subunit. Forms a tight heterodimer with protein bS6.

Functionally, binds as a heterodimer with protein bS6 to the central domain of the 16S rRNA, where it helps stabilize the platform of the 30S subunit. The chain is Small ribosomal subunit protein bS18B from Mycolicibacterium vanbaalenii (strain DSM 7251 / JCM 13017 / BCRC 16820 / KCTC 9966 / NRRL B-24157 / PYR-1) (Mycobacterium vanbaalenii).